A 291-amino-acid chain; its full sequence is MGHCRINGKTQVCGLFGFPVEHSFSPAMHNAAFQQLDLNWTYVPFRVHPDNLKQAVTGIFSLNMAGVNVTVPHKQRVMPFLDELEPAARIIGAVNTIVNNNGKLVGYNTDGKGFVRALTEEARFNPLGKSAILIGAGGAARAVAVQLALSGLRTIYITNRNQEKAEELARDILESTDTSASMIPWGNNLLGKRMVEVDLVVQATPLGMSPEVDQVPEFPFQMLTPQHLVCDLIYNPEQTCFLRRAKSRGSKTMNGLAMLLYQGVLAFELWTGFTAPVDVMRNVLHKQVAKG.

Shikimate is bound by residues 23 to 25 (SFS) and T70. The active-site Proton acceptor is K74. 2 residues coordinate shikimate: N95 and D110. NADP(+) contacts are provided by residues 135 to 139 (GAGGA) and L232. Y234 is a binding site for shikimate. G255 provides a ligand contact to NADP(+).

The protein belongs to the shikimate dehydrogenase family. In terms of assembly, homodimer.

It carries out the reaction shikimate + NADP(+) = 3-dehydroshikimate + NADPH + H(+). It participates in metabolic intermediate biosynthesis; chorismate biosynthesis; chorismate from D-erythrose 4-phosphate and phosphoenolpyruvate: step 4/7. In terms of biological role, involved in the biosynthesis of the chorismate, which leads to the biosynthesis of aromatic amino acids. Catalyzes the reversible NADPH linked reduction of 3-dehydroshikimate (DHSA) to yield shikimate (SA). The protein is Shikimate dehydrogenase (NADP(+)) of Desulforamulus reducens (strain ATCC BAA-1160 / DSM 100696 / MI-1) (Desulfotomaculum reducens).